The following is a 105-amino-acid chain: Heat shock protein HspQ (105 aa).

This sequence belongs to the HspQ family.

It localises to the cytoplasm. Involved in the degradation of certain denaturated proteins, including DnaA, during heat shock stress. This Yersinia enterocolitica serotype O:8 / biotype 1B (strain NCTC 13174 / 8081) protein is Heat shock protein HspQ.